A 490-amino-acid polypeptide reads, in one-letter code: uncharacterized protein (490 aa).

An N-terminal signal peptide occupies residues 1–19 (MSITSVSLYVYLICAGGHA).

It belongs to the mimivirus L137 family.

This is an uncharacterized protein from Acanthamoeba polyphaga (Amoeba).